Reading from the N-terminus, the 120-residue chain is Protein BEX4 (120 aa).

Positions 1-54 (MESKEELAANNLNGENAQQENEGGEQAPTQNEEESRHLGGGEGQKPGGNIRRGR) are disordered. The span at 8–27 (AANNLNGENAQQENEGGEQA) shows a compositional bias: low complexity. Positions 31–90 (NEEESRHLGGGEGQKPGGNIRRGRVRRLVPNFRWAIPNRHIEHNEARDDVERFVGQMMEI) are interaction with SIRT2. The tract at residues 31–120 (NEEESRHLGG…DNHYDFCLIP (90 aa)) is interaction with alpha-tubulin. Cysteine 117 lines the Zn(2+) pocket.

The protein belongs to the BEX family. As to quaternary structure, interacts with alpha-tubulin. Interacts with SIRT2. Ubiquitinated and degraded by the proteasome. Very high expression in heart, skeletal muscle, liver, and kidney. The levels of expression are uniform throughout the brain.

It is found in the cytoplasm. Its subcellular location is the cytoskeleton. The protein localises to the spindle pole. The protein resides in the nucleus. Its function is as follows. May play a role in microtubule deacetylation by negatively regulating the SIRT2 deacetylase activity toward alpha-tubulin and thereby participate in the control of cell cycle progression and genomic stability. In absence of reductive stress, acts as a pseudosubstrate for the CRL2(FEM1B) complex: associates with FEM1B via zinc, thereby preventing association between FEM1B and its substrates. In Homo sapiens (Human), this protein is Protein BEX4.